The chain runs to 514 residues: Protein phosphatase 1H (514 aa).

The residue at position 7 (Ser7) is a Phosphoserine. In terms of domain architecture, PPM-type phosphatase spans 77 to 507; it reads ATGYAEVINA…DDISVYVIPL (431 aa). Positions 109 to 135 are disordered; it reads AVTSTPNRNSSKRRSSLPNGEGLQLKE. Position 113 is a phosphothreonine (Thr113). Ser124 and Ser211 each carry phosphoserine. The residue at position 213 (Arg213) is an Omega-N-methylarginine. A Phosphoserine modification is found at Ser221. The residue at position 224 (Thr224) is a Phosphothreonine. At Ser422 the chain carries Phosphoserine.

This sequence belongs to the PP2C family.

It is found in the nucleus. Its subcellular location is the cytoplasm. It catalyses the reaction O-phospho-L-seryl-[protein] + H2O = L-seryl-[protein] + phosphate. The catalysed reaction is O-phospho-L-threonyl-[protein] + H2O = L-threonyl-[protein] + phosphate. Dephosphorylates CDKN1B at 'Thr-187', thus removing a signal for proteasomal degradation. The chain is Protein phosphatase 1H (PPM1H) from Homo sapiens (Human).